Reading from the N-terminus, the 223-residue chain is Ubiquitin carboxyl-terminal hydrolase isozyme L1 (223 aa).

N-acetylmethionine is present on methionine 1. The 220-residue stretch at 2-221 (QLKPMEINPE…VRFSAVALCK (220 aa)) folds into the UCH catalytic domain. The segment at 5–10 (PMEINP) is interaction with ubiquitin. Cysteine 90 (nucleophile) is an active-site residue. Serine 125 bears the Phosphoserine mark. The Proton donor role is filled by histidine 161. The interval 211-216 (EVRFSA) is interaction with ubiquitin. Cysteine 220 carries S-farnesyl cysteine lipidation. Positions 221-223 (KAA) are cleaved as a propeptide — removed in mature form.

Belongs to the peptidase C12 family. Monomer. Homodimer. Interacts with COPS5 and SNCA. In terms of processing, O-glycosylated. As to expression, expressed in brain, where it is found in neurons but not in oligodendrocytes or astrocytes. Found in the ganglion cell layer and the inner nuclear layer of the retina (at protein level). Expressed in brain and testis. In the brain, expression is at its lowest in replaceable neurons of hippocampus and olfactory bulb. Highly expressed in senescent pituitary. In skeletal muscle, primarily expressed in oxidative muscle fibers.

It localises to the cytoplasm. Its subcellular location is the endoplasmic reticulum membrane. It catalyses the reaction Thiol-dependent hydrolysis of ester, thioester, amide, peptide and isopeptide bonds formed by the C-terminal Gly of ubiquitin (a 76-residue protein attached to proteins as an intracellular targeting signal).. Functionally, deubiquitinase that plays a role in the regulation of several processes such as maintenance of synaptic function, cardiac function, inflammatory response or osteoclastogenesis. Abrogates the ubiquitination of multiple proteins including WWTR1/TAZ, EGFR, HIF1A and beta-site amyloid precursor protein cleaving enzyme 1/BACE1. In addition, recognizes and hydrolyzes a peptide bond at the C-terminal glycine of ubiquitin to maintain a stable pool of monoubiquitin that is a key requirement for the ubiquitin-proteasome and the autophagy-lysosome pathways. Regulates amyloid precursor protein/APP processing by promoting BACE1 degradation resulting in decreased amyloid beta production. Plays a role in the immune response by regulating the ability of MHC I molecules to reach cross-presentation compartments competent for generating Ag-MHC I complexes. Mediates the 'Lys-48'-linked deubiquitination of the transcriptional coactivator WWTR1/TAZ leading to its stabilization and inhibition of osteoclastogenesis. Deubiquitinates and stabilizes epidermal growth factor receptor EGFR to prevent its degradation and to activate its downstream mediators. Modulates oxidative activity in skeletal muscle by regulating key mitochondrial oxidative proteins. Enhances the activity of hypoxia-inducible factor 1-alpha/HIF1A by abrogateing its VHL E3 ligase-mediated ubiquitination and consequently inhibiting its degradation. The chain is Ubiquitin carboxyl-terminal hydrolase isozyme L1 (Uchl1) from Mus musculus (Mouse).